We begin with the raw amino-acid sequence, 358 residues long: Low-specificity L-threonine aldolase 1 (358 aa).

The residue at position 207 (K207) is an N6-(pyridoxal phosphate)lysine.

Belongs to the threonine aldolase family. Pyridoxal 5'-phosphate serves as cofactor. In terms of tissue distribution, expressed in root tips, seedlings, carpels and seeds.

It catalyses the reaction L-threonine = acetaldehyde + glycine. The catalysed reaction is L-allo-threonine = acetaldehyde + glycine. It participates in amino-acid degradation; L-threonine degradation via aldolase pathway; acetaldehyde and glycine from L-threonine: step 1/1. Its function is as follows. Threonine aldolase involved in threonine degradation to glycine. May play a role in the removal of L-allo-threonine. The polypeptide is Low-specificity L-threonine aldolase 1 (Arabidopsis thaliana (Mouse-ear cress)).